We begin with the raw amino-acid sequence, 108 residues long: UPF0102 protein Shewana3_3881 (108 aa).

It belongs to the UPF0102 family.

This Shewanella sp. (strain ANA-3) protein is UPF0102 protein Shewana3_3881.